Consider the following 361-residue polypeptide: Chorismate synthase (361 aa).

NADP(+) is bound by residues R48 and R54. Residues 125-127 (RSS), 238-239 (NA), G278, 293-297 (KPTSS), and R319 contribute to the FMN site.

The protein belongs to the chorismate synthase family. As to quaternary structure, homotetramer. It depends on FMNH2 as a cofactor.

It carries out the reaction 5-O-(1-carboxyvinyl)-3-phosphoshikimate = chorismate + phosphate. Its pathway is metabolic intermediate biosynthesis; chorismate biosynthesis; chorismate from D-erythrose 4-phosphate and phosphoenolpyruvate: step 7/7. Its function is as follows. Catalyzes the anti-1,4-elimination of the C-3 phosphate and the C-6 proR hydrogen from 5-enolpyruvylshikimate-3-phosphate (EPSP) to yield chorismate, which is the branch point compound that serves as the starting substrate for the three terminal pathways of aromatic amino acid biosynthesis. This reaction introduces a second double bond into the aromatic ring system. This is Chorismate synthase from Photorhabdus laumondii subsp. laumondii (strain DSM 15139 / CIP 105565 / TT01) (Photorhabdus luminescens subsp. laumondii).